Here is a 320-residue protein sequence, read N- to C-terminus: Peroxidase 66 (320 aa).

Positions 1 to 29 (MAASVSASCLNRLSSLAVVLVALASAASA) are cleaved as a signal peptide. The residue at position 30 (glutamine 30) is a Pyrrolidone carboxylic acid. Cystine bridges form between cysteine 40/cysteine 118, cysteine 73/cysteine 78, cysteine 124/cysteine 315, and cysteine 202/cysteine 227. Residue histidine 71 is the Proton acceptor of the active site. The Ca(2+) site is built by aspartate 72, valine 75, glycine 77, aspartate 79, and serine 81. N-linked (GlcNAc...) asparagine glycans are attached at residues asparagine 85 and asparagine 96. Proline 165 is a substrate binding site. Histidine 195 is a heme b binding site. Threonine 196 lines the Ca(2+) pocket. An N-linked (GlcNAc...) asparagine glycan is attached at asparagine 211. Residues aspartate 239, threonine 242, and aspartate 247 each contribute to the Ca(2+) site.

Belongs to the peroxidase family. Classical plant (class III) peroxidase subfamily. Heme b serves as cofactor. The cofactor is Ca(2+).

The protein resides in the secreted. It catalyses the reaction 2 a phenolic donor + H2O2 = 2 a phenolic radical donor + 2 H2O. Its function is as follows. Removal of H(2)O(2), oxidation of toxic reductants, biosynthesis and degradation of lignin, suberization, auxin catabolism, response to environmental stresses such as wounding, pathogen attack and oxidative stress. These functions might be dependent on each isozyme/isoform in each plant tissue. The protein is Peroxidase 66 (PER66) of Zea mays (Maize).